The primary structure comprises 227 residues: Protein rapunzel (227 aa).

A helical membrane pass occupies residues L179–I196.

The protein localises to the membrane. The polypeptide is Protein rapunzel (Danio rerio (Zebrafish)).